A 208-amino-acid polypeptide reads, in one-letter code: Outer-membrane lipoprotein carrier protein (208 aa).

An N-terminal signal peptide occupies residues 1–22 (MKKIFTIAALSLPLFCHLPAMA).

It belongs to the LolA family. As to quaternary structure, monomer.

Its subcellular location is the periplasm. Functionally, participates in the translocation of lipoproteins from the inner membrane to the outer membrane. Only forms a complex with a lipoprotein if the residue after the N-terminal Cys is not an aspartate (The Asp acts as a targeting signal to indicate that the lipoprotein should stay in the inner membrane). This is Outer-membrane lipoprotein carrier protein from Shewanella pealeana (strain ATCC 700345 / ANG-SQ1).